A 255-amino-acid chain; its full sequence is uncharacterized protein (255 aa).

This sequence belongs to the methyltransferase superfamily.

This is an uncharacterized protein from Mycolicibacterium vanbaalenii (strain DSM 7251 / JCM 13017 / BCRC 16820 / KCTC 9966 / NRRL B-24157 / PYR-1) (Mycobacterium vanbaalenii).